The sequence spans 113 residues: MAKGGFPGGFGGGNMNNLMKQAQKLQKQMEDMQKDLETKEFETSVGGGAVSVTVTGKKEVKSINIKPEVVDPDDVEMLEDLVLTAVNEALRKAEEETASKMGKLTGGMPGGLF.

Residues 1-14 show a composition bias toward gly residues; it reads MAKGGFPGGFGGGN. The interval 1–31 is disordered; the sequence is MAKGGFPGGFGGGNMNNLMKQAQKLQKQMED.

Belongs to the YbaB/EbfC family. In terms of assembly, homodimer.

It is found in the cytoplasm. The protein localises to the nucleoid. Its function is as follows. Binds to DNA and alters its conformation. May be involved in regulation of gene expression, nucleoid organization and DNA protection. In Clostridium botulinum (strain Alaska E43 / Type E3), this protein is Nucleoid-associated protein CLH_3225.